Here is a 255-residue protein sequence, read N- to C-terminus: Imidazole glycerol phosphate synthase subunit HisF (255 aa).

Catalysis depends on residues aspartate 11 and aspartate 130.

It belongs to the HisA/HisF family. As to quaternary structure, heterodimer of HisH and HisF.

Its subcellular location is the cytoplasm. It carries out the reaction 5-[(5-phospho-1-deoxy-D-ribulos-1-ylimino)methylamino]-1-(5-phospho-beta-D-ribosyl)imidazole-4-carboxamide + L-glutamine = D-erythro-1-(imidazol-4-yl)glycerol 3-phosphate + 5-amino-1-(5-phospho-beta-D-ribosyl)imidazole-4-carboxamide + L-glutamate + H(+). It functions in the pathway amino-acid biosynthesis; L-histidine biosynthesis; L-histidine from 5-phospho-alpha-D-ribose 1-diphosphate: step 5/9. Its function is as follows. IGPS catalyzes the conversion of PRFAR and glutamine to IGP, AICAR and glutamate. The HisF subunit catalyzes the cyclization activity that produces IGP and AICAR from PRFAR using the ammonia provided by the HisH subunit. This is Imidazole glycerol phosphate synthase subunit HisF from Maricaulis maris (strain MCS10) (Caulobacter maris).